A 255-amino-acid chain; its full sequence is 5-oxoprolinase subunit A (255 aa).

It belongs to the LamB/PxpA family. As to quaternary structure, forms a complex composed of PxpA, PxpB and PxpC.

The catalysed reaction is 5-oxo-L-proline + ATP + 2 H2O = L-glutamate + ADP + phosphate + H(+). Catalyzes the cleavage of 5-oxoproline to form L-glutamate coupled to the hydrolysis of ATP to ADP and inorganic phosphate. This is 5-oxoprolinase subunit A from Nitrobacter winogradskyi (strain ATCC 25391 / DSM 10237 / CIP 104748 / NCIMB 11846 / Nb-255).